A 75-amino-acid chain; its full sequence is uncharacterized protein (75 aa).

Residues 1-75 (MIKIYSTPTC…KAEIDKLIEK (75 aa)) form the Glutaredoxin domain. Cysteine 10 and cysteine 13 are disulfide-bonded.

It belongs to the glutaredoxin family.

This is an uncharacterized protein from Clostridium pasteurianum.